Here is a 274-residue protein sequence, read N- to C-terminus: MALIKTKPTSAGRRFVVKTIDTRLHKGNPHSALVEVQSHSGGRNNLGRVTRRHQGGGHKSHYRLVDFKRNKLDIPGKVERLEYDPNRSAHIALICYVDGERRYILAAKGMSVGDPVLSAEQTPIKPGNCMPLRGIPVGSVVHNVEMRPGKGGQIARSAGASVQLMAREGDYAQLRLRSGEVRRIHVSCRATIGEVGNEEHGSRQLGKAGATRWRGVRPTVRGVAMNPVDHPHGGGEGRTSGGRHPVSPWGQPTKGYRTRRNKRTSNMIVRRRSR.

Disordered stretches follow at residues 40-59 (SGGR…GGHK) and 223-274 (VAMN…RRSR). 2 stretches are compositionally biased toward basic residues: residues 49 to 59 (VTRRHQGGGHK) and 256 to 274 (YRTR…RRSR).

This sequence belongs to the universal ribosomal protein uL2 family. In terms of assembly, part of the 50S ribosomal subunit. Forms a bridge to the 30S subunit in the 70S ribosome.

In terms of biological role, one of the primary rRNA binding proteins. Required for association of the 30S and 50S subunits to form the 70S ribosome, for tRNA binding and peptide bond formation. It has been suggested to have peptidyltransferase activity; this is somewhat controversial. Makes several contacts with the 16S rRNA in the 70S ribosome. This is Large ribosomal subunit protein uL2 from Acidithiobacillus ferrooxidans (strain ATCC 23270 / DSM 14882 / CIP 104768 / NCIMB 8455) (Ferrobacillus ferrooxidans (strain ATCC 23270)).